Here is a 144-residue protein sequence, read N- to C-terminus: Flagellar assembly factor FliW (144 aa).

The protein belongs to the FliW family. Interacts with translational regulator CsrA and flagellin(s).

The protein resides in the cytoplasm. Acts as an anti-CsrA protein, binds CsrA and prevents it from repressing translation of its target genes, one of which is flagellin. Binds to flagellin and participates in the assembly of the flagellum. This chain is Flagellar assembly factor FliW, found in Bacillus pumilus (strain SAFR-032).